Here is a 271-residue protein sequence, read N- to C-terminus: Collectin-11 (271 aa).

An N-terminal signal peptide occupies residues 1–25; it reads MVGEKLVAYMLVSVLGLALLRSVFG. The Collagen-like domain occupies 44–103; that stretch reads GEAGEKGEKGAPGRPGRVGPTGEQGPPGDKGQKGSPGRYGKMGPTGPKGLKGDMGDPGPK. Residues 46-112 form a disordered region; the sequence is AGEKGEKGAP…KGPNGEPGVP (67 aa). Positions 124–148 form a coiled coil; that stretch reads EMDIQVVQLTNELKFIKNAVAGIKE. The C-type lectin domain maps to 149–265; it reads TDSKVYLLVK…CQLTMYFVCE (117 aa). 2 disulfides stabilise this stretch: cysteine 170-cysteine 264 and cysteine 242-cysteine 256. Arginine 200 contributes to the a carbohydrate binding site. 8 residues coordinate Ca(2+): aspartate 207, glutamate 211, glutamate 232, asparagine 234, asparagine 235, aspartate 238, glutamate 240, and aspartate 241. Residue glutamate 240 participates in a carbohydrate binding. A carbohydrate-binding positions include glutamate 244 and 252–254; that span reads IDV. A Ca(2+)-binding site is contributed by aspartate 253.

This sequence belongs to the COLEC10/COLEC11 family. Homotrimer; disulfide-linked. Interacts with MASP1; probably triggers the lectin pathway of complement.

It is found in the secreted. Functionally, lectin that plays a role in innate immunity, apoptosis and embryogenesis. Calcium-dependent lectin that binds self and non-self glycoproteins presenting high mannose oligosaccharides with at least one terminal alpha-1,2-linked mannose epitope. Primarily recognizes the terminal disaccharide of the glycan. Also recognizes a subset of fucosylated glycans and lipopolysaccharides. Plays a role in innate immunity through its ability to bind non-self sugars presented by microorganisms and to activate the complement through the recruitment of MAPS1. Also plays a role in apoptosis through its ability to bind in a calcium-independent manner the DNA present at the surface of apoptotic cells and to activate the complement in response to this binding. Finally, plays a role in development, probably serving as a guidance cue during the migration of neural crest cells and other cell types during embryogenesis. This chain is Collectin-11 (colec11), found in Danio rerio (Zebrafish).